Here is a 340-residue protein sequence, read N- to C-terminus: NADH-quinone oxidoreductase subunit H (340 aa).

8 consecutive transmembrane segments (helical) span residues 4–24 (TIGI…PLLI), 78–98 (YLFV…WAVI), 113–133 (VLYL…AGWA), 151–171 (VSYE…AGSM), 184–204 (MLHW…IAGI), 244–264 (SMIL…LSPF), 273–293 (IFFV…FLFV), and 316–336 (VLIP…VAHV).

The protein belongs to the complex I subunit 1 family. As to quaternary structure, NDH-1 is composed of 14 different subunits. Subunits NuoA, H, J, K, L, M, N constitute the membrane sector of the complex.

The protein resides in the cell inner membrane. The catalysed reaction is a quinone + NADH + 5 H(+)(in) = a quinol + NAD(+) + 4 H(+)(out). NDH-1 shuttles electrons from NADH, via FMN and iron-sulfur (Fe-S) centers, to quinones in the respiratory chain. The immediate electron acceptor for the enzyme in this species is believed to be ubiquinone. Couples the redox reaction to proton translocation (for every two electrons transferred, four hydrogen ions are translocated across the cytoplasmic membrane), and thus conserves the redox energy in a proton gradient. This subunit may bind ubiquinone. The sequence is that of NADH-quinone oxidoreductase subunit H from Legionella pneumophila (strain Corby).